A 450-amino-acid chain; its full sequence is Ammonium transporter Rh type A (450 aa).

Topologically, residues 1 to 4 are cytoplasmic; it reads MRFK. Residues 5–25 traverse the membrane as a helical segment; the sequence is FSLIALSLEVVMIVSFALFVE. The Extracellular portion of the chain corresponds to 26–72; the sequence is YETSQNGSQKSASQQNASQQNAAAQQNASQQGNASSPAKEDQFFQLY. Residues Asn31, Asn41, Asn52, and Asn58 are each glycosylated (N-linked (GlcNAc...) asparagine). The segment at 34–61 is disordered; that stretch reads QKSASQQNASQQNAAAQQNASQQGNASS. A helical membrane pass occupies residues 73-93; sequence PLFQHVHVMIFVGFGFLMTFL. Residues 94–97 lie on the Cytoplasmic side of the membrane; the sequence is KKYG. A helical transmembrane segment spans residues 98–118; it reads FSGVGFNLFLAALGLQWGTIV. The Extracellular portion of the chain corresponds to 119 to 134; it reads QGLLHSHGLKFPFRIK. The chain crosses the membrane as a helical span at residues 135–155; it reads NMINADFSTATVLISFGAVLG. The Cytoplasmic segment spans residues 156 to 159; it reads KTSP. The helical transmembrane segment at 160–180 threads the bilayer; sequence IQMIIMTILEIAVFAGNEHLV. Residues 181 to 189 are Extracellular-facing; sequence TEIFKASDT. A helical membrane pass occupies residues 190 to 210; it reads GASMTIHAFGAYFGLAVAGVL. Residues 211-229 lie on the Cytoplasmic side of the membrane; that stretch reads YRSGLKHGHPNEESVYHSD. Residues 230–250 traverse the membrane as a helical segment; the sequence is LFAMIGTLFLWMFWPSFNSAI. The Extracellular portion of the chain corresponds to 251–260; sequence AQPENNQYRA. The helical transmembrane segment at 261–281 threads the bilayer; that stretch reads IVNTYMSLAACVITAYALSSL. The Cytoplasmic portion of the chain corresponds to 282-289; that stretch reads VERRGRLD. The chain crosses the membrane as a helical span at residues 290-307; that stretch reads MVHIQNATLAGGVAVGTC. Over 308 to 311 the chain is Extracellular; it reads ADME. The helical transmembrane segment at 312 to 332 threads the bilayer; sequence IPLYFAMTIGSIAGIISVLGY. Residues 333-349 lie on the Cytoplasmic side of the membrane; that stretch reads KFLSPLLAHKLMIHDTC. The chain crosses the membrane as a helical span at residues 350 to 370; sequence GVHNLHGLPGVFGGLASIVAI. Topologically, residues 371–384 are extracellular; it reads SWGKSTVSTMAMQA. The helical transmembrane segment at 385–405 threads the bilayer; sequence TALGSSIGSAIVGGLVTGLIL. Topologically, residues 406–450 are cytoplasmic; that stretch reads KLPVWNQPPDEYCFDDSVSWKVPKYRELDNYFFQHVTHNHVEHEV.

This sequence belongs to the ammonium transporter (TC 2.A.49) family. Rh subfamily. Homodimer. Heterotrimer; a RHCE monomer interacts with a RHAG homodimer. Component of the ankyrin-1 complex in the erythrocyte, composed of ANK1, RHCE, RHAG, SLC4A1, EPB42, GYPA, GYPB and AQP1. Interacts with GYPB (via the N-terminal); this interaction bridges the (RHAG)2(RHCE) heterotrimer with the SLC4A1 Band 3 I dimer complexed with GYPA. Glycosylated.

The protein localises to the membrane. The enzyme catalyses methylamine(out) = methylamine(in). It catalyses the reaction NH4(+)(in) = NH4(+)(out). It carries out the reaction CO2(out) = CO2(in). Its function is as follows. Component of the ankyrin-1 complex, a multiprotein complex involved in the stability and shape of the erythrocyte membrane. Heterotrimer with RHCE (RHAG)2(RHCE), that transports ammonium and its related derivative methylammonium, in both neutral and ionic forms, across the erythrocyte membrane. The transport of NH4(+) is electrogenic and masks the NH3 transport. Also, may act as a CO2 channel. Moreover in erythrocyte, regulates RHD membrane expression and is associated with rhesus blood group antigen expression. This Rattus norvegicus (Rat) protein is Ammonium transporter Rh type A.